Here is a 458-residue protein sequence, read N- to C-terminus: Tubulin beta chain (458 aa).

GTP-binding residues include Gln11, Glu69, Ser138, Gly142, Thr143, Gly144, Asn204, and Asn226. Glu69 contributes to the Mg(2+) binding site. Positions 426–458 (EAATVEGEEEEDEYAEGGVVNGDQSYDEPYQAA) are disordered. A compositionally biased stretch (acidic residues) spans 431–440 (EGEEEEDEYA).

It belongs to the tubulin family. In terms of assembly, dimer of alpha and beta chains. A typical microtubule is a hollow water-filled tube with an outer diameter of 25 nm and an inner diameter of 15 nM. Alpha-beta heterodimers associate head-to-tail to form protofilaments running lengthwise along the microtubule wall with the beta-tubulin subunit facing the microtubule plus end conferring a structural polarity. Microtubules usually have 13 protofilaments but different protofilament numbers can be found in some organisms and specialized cells. Requires Mg(2+) as cofactor.

Its subcellular location is the cytoplasm. The protein localises to the cytoskeleton. Its function is as follows. Tubulin is the major constituent of microtubules, a cylinder consisting of laterally associated linear protofilaments composed of alpha- and beta-tubulin heterodimers. Microtubules grow by the addition of GTP-tubulin dimers to the microtubule end, where a stabilizing cap forms. Below the cap, tubulin dimers are in GDP-bound state, owing to GTPase activity of alpha-tubulin. In Pyropia yezoensis (Susabi-nori), this protein is Tubulin beta chain (TUBB1).